A 23-amino-acid chain; its full sequence is Dermaseptin-4 (23 aa).

Gln23 is subject to Glutamine amide.

In terms of tissue distribution, expressed by the skin glands.

Its subcellular location is the secreted. Its function is as follows. Antimicrobial peptide, active against the Gram-positive bacterium S.aureus, and the Gram-negative bacteria E.coli and P.aeruginosa. Has hemolytic activity (5% hemolysis at 128 ug/ml). The chain is Dermaseptin-4 from Phyllomedusa tarsius (Brownbelly leaf frog).